Consider the following 191-residue polypeptide: Outer membrane lipoprotein DolP (191 aa).

Residues 1–18 (MKALSPIAVLISALLLQG) form the signal peptide. Cys-19 carries N-palmitoyl cysteine lipidation. A lipid anchor (S-diacylglycerol cysteine) is attached at Cys-19. 2 BON domains span residues 46-115 (DDGT…RQGQ) and 124-191 (NDTW…TFIK).

It belongs to the lipoprotein DolP family.

The protein resides in the cell outer membrane. Functionally, plays an important role in maintaining outer membrane integrity. This Escherichia coli O157:H7 protein is Outer membrane lipoprotein DolP.